The sequence spans 380 residues: Queuine tRNA-ribosyltransferase (380 aa).

D96 functions as the Proton acceptor in the catalytic mechanism. Substrate is bound by residues 96–100, D150, Q193, and G220; that span reads DSGGF. The segment at 251 to 257 is RNA binding; it reads GVGAPDS. Catalysis depends on D270, which acts as the Nucleophile. The segment at 275–279 is RNA binding; important for wobble base 34 recognition; that stretch reads TRIAR. Residues C308, C310, C313, and H339 each coordinate Zn(2+).

This sequence belongs to the queuine tRNA-ribosyltransferase family. Homodimer. Within each dimer, one monomer is responsible for RNA recognition and catalysis, while the other monomer binds to the replacement base PreQ1. Zn(2+) serves as cofactor.

The enzyme catalyses 7-aminomethyl-7-carbaguanine + guanosine(34) in tRNA = 7-aminomethyl-7-carbaguanosine(34) in tRNA + guanine. It participates in tRNA modification; tRNA-queuosine biosynthesis. Its function is as follows. Catalyzes the base-exchange of a guanine (G) residue with the queuine precursor 7-aminomethyl-7-deazaguanine (PreQ1) at position 34 (anticodon wobble position) in tRNAs with GU(N) anticodons (tRNA-Asp, -Asn, -His and -Tyr). Catalysis occurs through a double-displacement mechanism. The nucleophile active site attacks the C1' of nucleotide 34 to detach the guanine base from the RNA, forming a covalent enzyme-RNA intermediate. The proton acceptor active site deprotonates the incoming PreQ1, allowing a nucleophilic attack on the C1' of the ribose to form the product. After dissociation, two additional enzymatic reactions on the tRNA convert PreQ1 to queuine (Q), resulting in the hypermodified nucleoside queuosine (7-(((4,5-cis-dihydroxy-2-cyclopenten-1-yl)amino)methyl)-7-deazaguanosine). This chain is Queuine tRNA-ribosyltransferase, found in Streptococcus pneumoniae (strain Taiwan19F-14).